Reading from the N-terminus, the 343-residue chain is Cytosolic Fe-S cluster assembly factor CFD1 (343 aa).

An ATP-binding site is contributed by 15–22; the sequence is GKGGVGKS. Composition is skewed to polar residues over residues 80–91 and 99–110; these read PSSDGLNGSQRA and ESSSSTVETAPQ. The tract at residues 80–110 is disordered; that stretch reads PSSDGLNGSQRANKPDDSNESSSSTVETAPQ. Cys241 and Cys244 together coordinate [4Fe-4S] cluster.

Belongs to the Mrp/NBP35 ATP-binding proteins family. NUBP2/CFD1 subfamily. As to quaternary structure, heterotetramer of 2 NBP35 and 2 CFD1 chains. Requires [4Fe-4S] cluster as cofactor.

It localises to the cytoplasm. Its function is as follows. Component of the cytosolic iron-sulfur (Fe/S) protein assembly (CIA) machinery. Required for maturation of extramitochondrial Fe-S proteins. The NBP35-CFD1 heterotetramer forms a Fe-S scaffold complex, mediating the de novo assembly of an Fe-S cluster and its transfer to target apoproteins. This is Cytosolic Fe-S cluster assembly factor CFD1 from Coccidioides immitis (strain RS) (Valley fever fungus).